We begin with the raw amino-acid sequence, 392 residues long: 3-ketoacyl-CoA thiolase (392 aa).

Catalysis depends on Cys95, which acts as the Acyl-thioester intermediate. Catalysis depends on proton acceptor residues His347 and Cys377.

Belongs to the thiolase-like superfamily. Thiolase family. Heterotetramer of two alpha chains (FadB) and two beta chains (FadA).

It localises to the cytoplasm. It carries out the reaction an acyl-CoA + acetyl-CoA = a 3-oxoacyl-CoA + CoA. Its pathway is lipid metabolism; fatty acid beta-oxidation. Its function is as follows. Catalyzes the final step of fatty acid oxidation in which acetyl-CoA is released and the CoA ester of a fatty acid two carbons shorter is formed. This Chromohalobacter salexigens (strain ATCC BAA-138 / DSM 3043 / CIP 106854 / NCIMB 13768 / 1H11) protein is 3-ketoacyl-CoA thiolase.